A 183-amino-acid chain; its full sequence is Oligoribonuclease (183 aa).

Residues 8-171 (LIWLDLEMTG…QDIRDSIEEL (164 aa)) enclose the Exonuclease domain. Tyrosine 129 is an active-site residue.

It belongs to the oligoribonuclease family.

The protein localises to the cytoplasm. Its function is as follows. 3'-to-5' exoribonuclease specific for small oligoribonucleotides. The chain is Oligoribonuclease from Coxiella burnetii (strain RSA 493 / Nine Mile phase I).